The chain runs to 512 residues: 2-isopropylmalate synthase (512 aa).

Positions 5–267 (VVIFDTTLRD…ETSINKSEIY (263 aa)) constitute a Pyruvate carboxyltransferase domain. Positions 14, 202, 204, and 238 each coordinate Mn(2+). The tract at residues 391–512 (SLEYLHITSG…LPKAKTERAV (122 aa)) is regulatory domain.

It belongs to the alpha-IPM synthase/homocitrate synthase family. LeuA type 1 subfamily. Homodimer. Mn(2+) is required as a cofactor.

It is found in the cytoplasm. The enzyme catalyses 3-methyl-2-oxobutanoate + acetyl-CoA + H2O = (2S)-2-isopropylmalate + CoA + H(+). The protein operates within amino-acid biosynthesis; L-leucine biosynthesis; L-leucine from 3-methyl-2-oxobutanoate: step 1/4. Functionally, catalyzes the condensation of the acetyl group of acetyl-CoA with 3-methyl-2-oxobutanoate (2-ketoisovalerate) to form 3-carboxy-3-hydroxy-4-methylpentanoate (2-isopropylmalate). In Heliobacterium modesticaldum (strain ATCC 51547 / Ice1), this protein is 2-isopropylmalate synthase.